The following is a 115-amino-acid chain: Cysteine-rich venom protein 5 (115 aa).

Residues 1-22 form the signal peptide; the sequence is MSKVMIIMLVGMIFAIISTVSG. Cystine bridges form between Cys-26–Cys-41, Cys-33–Cys-44, and Cys-40–Cys-51. Residues 54–115 form a disordered region; it reads RIGPPINTQP…RKPTNRPRSH (62 aa). Composition is skewed to basic residues over residues 68 to 77 and 86 to 115; these read QPTRRTRGPK and NRTR…PRSH.

As to expression, expressed by the venom gland.

The protein localises to the secreted. The polypeptide is Cysteine-rich venom protein 5 (Pimpla hypochondriaca (Parasitoid wasp)).